Consider the following 263-residue polypeptide: Small ribosomal subunit protein eS4 (263 aa).

An S4 RNA-binding domain is found at 42–104 (LPLVIFLRNR…TNELFRLIYD (63 aa)).

It belongs to the eukaryotic ribosomal protein eS4 family.

This chain is Small ribosomal subunit protein eS4 (RpS4), found in Bombyx mori (Silk moth).